The chain runs to 356 residues: S-adenosylmethionine:tRNA ribosyltransferase-isomerase (356 aa).

Belongs to the QueA family. As to quaternary structure, monomer.

It localises to the cytoplasm. It carries out the reaction 7-aminomethyl-7-carbaguanosine(34) in tRNA + S-adenosyl-L-methionine = epoxyqueuosine(34) in tRNA + adenine + L-methionine + 2 H(+). The protein operates within tRNA modification; tRNA-queuosine biosynthesis. Functionally, transfers and isomerizes the ribose moiety from AdoMet to the 7-aminomethyl group of 7-deazaguanine (preQ1-tRNA) to give epoxyqueuosine (oQ-tRNA). This Cronobacter sakazakii (strain ATCC BAA-894) (Enterobacter sakazakii) protein is S-adenosylmethionine:tRNA ribosyltransferase-isomerase.